The following is a 239-amino-acid chain: Protein TIPIN homolog (239 aa).

Composition is skewed to acidic residues over residues 1–14 and 156–166; these read MDEMDDFFGNDELD and DGADDDEDDLF. Disordered stretches follow at residues 1–38 and 135–239; these read MDEMDDFFGNDELDREPSPFGEEAIEDNTGEEGSRRII and ESTD…NNDW. 2 stretches are compositionally biased toward basic and acidic residues: residues 169–193 and 206–223; these read LPEKETPTKPINHTEKVVDSPEKKN and YRMMEEERLREEQEAREA. The span at 224-239 shows a compositional bias: acidic residues; the sequence is EAEDELMEDFDLNNDW.

Belongs to the CSM3 family.

The protein localises to the cytoplasm. It localises to the nucleus. Required for normal progression of S-phase. Important for cell survival after DNA damage or replication stress. The sequence is that of Protein TIPIN homolog from Caenorhabditis briggsae.